Reading from the N-terminus, the 153-residue chain is MRFFLKLAPRCSVLLLLLLVTASRGLNIGDLLGSTPAKDQGCSRTCESQFCTIAPLLRYGKYCGILYSGCPGERPCDALDACCMVHDHCVDTHNDDYLNTMCNENLLSCIDRVSGATFPGNKCNVGQTASVIRGVIETAVFAGKILHKRDDGQ.

Positions 1–25 are cleaved as a signal peptide; that stretch reads MRFFLKLAPRCSVLLLLLLVTASRG. Disulfide bonds link cysteine 42–cysteine 70, cysteine 46–cysteine 76, cysteine 51–cysteine 123, cysteine 63–cysteine 83, cysteine 82–cysteine 109, and cysteine 89–cysteine 102. Residues tyrosine 62, glycine 64, and tyrosine 67 each contribute to the Ca(2+) site. Histidine 86 is an active-site residue. Position 87 (aspartate 87) interacts with Ca(2+).

It belongs to the phospholipase A2 family. The cofactor is Ca(2+).

The protein localises to the secreted. It carries out the reaction a 1,2-diacyl-sn-glycero-3-phosphocholine + H2O = a 1-acyl-sn-glycero-3-phosphocholine + a fatty acid + H(+). Functionally, PA2 catalyzes the calcium-dependent hydrolysis of the 2-acyl groups in 3-sn-phosphoglycerides. Releases lysophospholipids (LPLs) and free fatty acids (FFAs) from membrane phospholipids in response to hormones and other external stimuli. The protein is Probable phospholipase A2 homolog 2 (PLA2-II) of Oryza sativa subsp. japonica (Rice).